A 4516-amino-acid chain; its full sequence is Dynein axonemal heavy chain 1 (4516 aa).

The tract at residues 1–1748 (MVTLSISDTL…YIRAVNAEFI (1748 aa)) is stem. The tract at residues 78–160 (SSGSDKSLKN…RKSPLAGTDK (83 aa)) is disordered. Basic and acidic residues-rich tracts occupy residues 83-97 (KSLK…KEEA) and 113-129 (ENHD…RNPE). AAA stretches follow at residues 1749-1956 (YGYE…VISA), 2016-2249 (QAIR…TTVK), 2422-2682 (TMMP…VFQG), and 2780-2972 (DYNQ…CCTI). The short motif at 1787-1794 (GPAGTGKT) is the GPAGTGKT motif element. 1787-1794 (GPAGTGKT) serves as a coordination point for ATP. Residues 1837–1843 (CFDEFNR) carry the CFDEFNR motif motif. ATP is bound by residues 2054–2061 (GPTGSGKS), 2460–2467 (GPTGTGKT), and 2819–2826 (GVGGSGRS). Residues 2987 to 3285 (ATRFLHEIPE…MHKYHFVAKA (299 aa)) form a stalk region. Residues 3293-3394 (LREAQDDLEV…QDTVENLENM (102 aa)) are a coiled coil. AAA regions lie at residues 3388 to 3618 (VENL…EERP) and 3831 to 4050 (LPAF…SYNS).

It belongs to the dynein heavy chain family. As to quaternary structure, consists of at least two heavy chains and a number of intermediate and light chains. In terms of tissue distribution, expressed in brain.

The protein resides in the cytoplasm. It localises to the cytoskeleton. The protein localises to the cilium axoneme. Its subcellular location is the cell projection. It is found in the cilium. The protein resides in the flagellum. Force generating protein of cilia required for sperm flagellum motility. Produces force towards the minus ends of microtubules. Dynein has ATPase activity; the force-producing power stroke is thought to occur on release of ADP. Required in spermatozoa for the formation of the inner dynein arms and biogenesis of the axoneme. This chain is Dynein axonemal heavy chain 1, found in Rattus norvegicus (Rat).